The chain runs to 206 residues: Ras-related protein Ral-B (206 aa).

Position 21 to 29 (glycine 21 to alanine 29) interacts with GTP. Residues tyrosine 43–tyrosine 51 carry the Effector region motif. Residues aspartate 68–glutamine 72, asparagine 128–aspartate 131, and serine 158–lysine 160 contribute to the GTP site. Residues methionine 181–leucine 206 form a disordered region. Position 203 is a cysteine methyl ester (cysteine 203). Cysteine 203 is lipidated: S-geranylgeranyl cysteine. Residues cysteine 204–leucine 206 constitute a propeptide, removed in mature form.

This sequence belongs to the small GTPase superfamily. Ras family. In terms of assembly, interacts with EXOC2/Sec5 and EXOC8/Exo84. Interacts (via effector domain) with RALBP1. Post-translationally, prenylation is essential for membrane localization. The farnesylated form confers resistance to the proapoptotic and anti-anchorage-dependent growth effects of some geranylgeranyltransferase I inhibitors.

Its subcellular location is the cell membrane. The protein resides in the midbody. It catalyses the reaction GTP + H2O = GDP + phosphate + H(+). Alternates between an inactive form bound to GDP and an active form bound to GTP. Activated by a guanine nucleotide-exchange factor (GEF) and inactivated by a GTPase-activating protein (GAP). In terms of biological role, multifunctional GTPase involved in a variety of cellular processes including gene expression, cell migration, cell proliferation, oncogenic transformation and membrane trafficking. Accomplishes its multiple functions by interacting with distinct downstream effectors. Acts as a GTP sensor for GTP-dependent exocytosis of dense core vesicles. Required both to stabilize the assembly of the exocyst complex and to localize functional exocyst complexes to the leading edge of migrating cells. Required for suppression of apoptosis. In late stages of cytokinesis, upon completion of the bridge formation between dividing cells, mediates exocyst recruitment to the midbody to drive abscission. Involved in ligand-dependent receptor mediated endocytosis of the EGF and insulin receptors. This is Ras-related protein Ral-B (Ralb) from Rattus norvegicus (Rat).